Here is a 166-residue protein sequence, read N- to C-terminus: ATP synthase subunit b (166 aa).

A helical transmembrane segment spans residues 8–28 (FSFGLFFWQALILVILILLLV).

The protein belongs to the ATPase B chain family. F-type ATPases have 2 components, F(1) - the catalytic core - and F(0) - the membrane proton channel. F(1) has five subunits: alpha(3), beta(3), gamma(1), delta(1), epsilon(1). F(0) has three main subunits: a(1), b(2) and c(10-14). The alpha and beta chains form an alternating ring which encloses part of the gamma chain. F(1) is attached to F(0) by a central stalk formed by the gamma and epsilon chains, while a peripheral stalk is formed by the delta and b chains.

It localises to the cell inner membrane. Its function is as follows. F(1)F(0) ATP synthase produces ATP from ADP in the presence of a proton or sodium gradient. F-type ATPases consist of two structural domains, F(1) containing the extramembraneous catalytic core and F(0) containing the membrane proton channel, linked together by a central stalk and a peripheral stalk. During catalysis, ATP synthesis in the catalytic domain of F(1) is coupled via a rotary mechanism of the central stalk subunits to proton translocation. Functionally, component of the F(0) channel, it forms part of the peripheral stalk, linking F(1) to F(0). This chain is ATP synthase subunit b, found in Flavobacterium johnsoniae (strain ATCC 17061 / DSM 2064 / JCM 8514 / BCRC 14874 / CCUG 350202 / NBRC 14942 / NCIMB 11054 / UW101) (Cytophaga johnsonae).